A 329-amino-acid chain; its full sequence is Cytosolic sulfotransferase 6 (329 aa).

74–79 lines the 3'-phosphoadenylyl sulfate pocket; sequence KCGTTW. His140 serves as the catalytic Proton acceptor. 3'-phosphoadenylyl sulfate is bound by residues Arg162, Ser170, and 295 to 297; that span reads RKG.

It belongs to the sulfotransferase 1 family.

The protein localises to the cytoplasm. Functionally, sulfotransferase that utilizes 3'-phospho-5'-adenylyl sulfate (PAPS) as sulfonate donor. The polypeptide is Cytosolic sulfotransferase 6 (SOT6) (Arabidopsis thaliana (Mouse-ear cress)).